The primary structure comprises 54 residues: Ovomucoid (54 aa).

Positions 4-54 constitute a Kazal-like domain; the sequence is VDCSDYPKPVCPLDYMPLCGSDSKTYSNKCNFCNAVVESSGTLTLRHFGKC. 3 disulfide bridges follow: Cys-6/Cys-36, Cys-14/Cys-33, and Cys-22/Cys-54.

This is the only ovomucoid third domain known to be not glycosylated.

Its subcellular location is the secreted. This chain is Ovomucoid, found in Struthio camelus (Common ostrich).